Consider the following 362-residue polypeptide: Cobalt-precorrin-5B C(1)-methyltransferase (362 aa).

This sequence belongs to the CbiD family.

It catalyses the reaction Co-precorrin-5B + S-adenosyl-L-methionine = Co-precorrin-6A + S-adenosyl-L-homocysteine. Its pathway is cofactor biosynthesis; adenosylcobalamin biosynthesis; cob(II)yrinate a,c-diamide from sirohydrochlorin (anaerobic route): step 6/10. Functionally, catalyzes the methylation of C-1 in cobalt-precorrin-5B to form cobalt-precorrin-6A. This chain is Cobalt-precorrin-5B C(1)-methyltransferase, found in Desulfotalea psychrophila (strain LSv54 / DSM 12343).